A 117-amino-acid chain; its full sequence is Probable glycerol dehydratase-reactivating factor small subunit (117 aa).

Residue Glu-31 coordinates Mg(2+).

The protein belongs to the DdrB/PduH family. As to quaternary structure, member of the GDR complex, probably composed of DhaF(2)/DhaG(2). Mg(2+) serves as cofactor.

In terms of biological role, small subunit of the glycerol dehydratase-reactivating factor (GDR), which reactivates suicidally inhibited adenosylcobalamin-dependent glycerol dehydratase. The protein is Probable glycerol dehydratase-reactivating factor small subunit of Citrobacter freundii.